Here is a 68-residue protein sequence, read N- to C-terminus: ATP synthase F(0) complex subunit 8 (68 aa).

A helical transmembrane segment spans residues 8 to 24; the sequence is VWPTIITSMLLTLFLLM. Lys54 carries the post-translational modification N6-acetyllysine; alternate. Lys54 carries the N6-succinyllysine; alternate modification. The residue at position 57 (Lys57) is an N6-acetyllysine.

The protein belongs to the ATPase protein 8 family. Component of the ATP synthase complex composed at least of ATP5F1A/subunit alpha, ATP5F1B/subunit beta, ATP5MC1/subunit c (homooctomer), MT-ATP6/subunit a, MT-ATP8/subunit 8, ATP5ME/subunit e, ATP5MF/subunit f, ATP5MG/subunit g, ATP5MK/subunit k, ATP5MJ/subunit j, ATP5F1C/subunit gamma, ATP5F1D/subunit delta, ATP5F1E/subunit epsilon, ATP5PF/subunit F6, ATP5PB/subunit b, ATP5PD/subunit d, ATP5PO/subunit OSCP. ATP synthase complex consists of a soluble F(1) head domain (subunits alpha(3) and beta(3)) - the catalytic core - and a membrane F(0) domain - the membrane proton channel (subunits c, a, 8, e, f, g, k and j). These two domains are linked by a central stalk (subunits gamma, delta, and epsilon) rotating inside the F1 region and a stationary peripheral stalk (subunits F6, b, d, and OSCP). Interacts with PRICKLE3.

The protein localises to the mitochondrion membrane. Subunit 8, of the mitochondrial membrane ATP synthase complex (F(1)F(0) ATP synthase or Complex V) that produces ATP from ADP in the presence of a proton gradient across the membrane which is generated by electron transport complexes of the respiratory chain. ATP synthase complex consist of a soluble F(1) head domain - the catalytic core - and a membrane F(1) domain - the membrane proton channel. These two domains are linked by a central stalk rotating inside the F(1) region and a stationary peripheral stalk. During catalysis, ATP synthesis in the catalytic domain of F(1) is coupled via a rotary mechanism of the central stalk subunits to proton translocation. In vivo, can only synthesize ATP although its ATP hydrolase activity can be activated artificially in vitro. Part of the complex F(0) domain. This Symphalangus syndactylus (Siamang) protein is ATP synthase F(0) complex subunit 8.